The primary structure comprises 130 residues: UPF0225 protein CE1570 (130 aa).

It belongs to the UPF0225 family.

The protein is UPF0225 protein CE1570 of Corynebacterium efficiens (strain DSM 44549 / YS-314 / AJ 12310 / JCM 11189 / NBRC 100395).